Consider the following 473-residue polypeptide: MTNQPLTLAEKVWRDHIVAAGENGGPDLLYIDLHLVHEVTSPQAFDGLRQAGRKVRRPDLTIATEDHNVPTIGVKTGDLQEIQEPTSRLQVSTLRDNAKEFGIRLHSMGDIEQGIVHTVGPQLGLTQPGMTVVCGDSHTSTHGAFGSIAMGIGTSEVEHVLATQTLPLKPFKTMAIEVSGELQPDVTSKDLILAIIAKIGTGGGQGHIIEYRGEAIEKLSMEARMTMCNMSIEAGARAGMIAPDQVTFDYLEGRPHAPKGADWDAAVEYWKSLRTDDDAQFDTVVHIDGSALTPFVTWGTNPGQGLPLAEAIPQLEDFTNDNDRLAAERAMEYMDLQPGTPLRDIKIDTVFLGSCTNSRIEDLRAAADVLKGRTVADGTRMIVVPSSTRVKMQAEEEGLDQIFIDAGAEWRTAGCSMCLGMNPDQLAPGERSASTSNRNFEGRQGKGGRTHLVSPPVAAATAVTGHLAGPADL.

[4Fe-4S] cluster is bound by residues Cys355, Cys415, and Cys418. Residues 423–452 (PDQLAPGERSASTSNRNFEGRQGKGGRTHL) form a disordered region.

This sequence belongs to the aconitase/IPM isomerase family. LeuC type 1 subfamily. Heterodimer of LeuC and LeuD. Requires [4Fe-4S] cluster as cofactor.

The enzyme catalyses (2R,3S)-3-isopropylmalate = (2S)-2-isopropylmalate. The protein operates within amino-acid biosynthesis; L-leucine biosynthesis; L-leucine from 3-methyl-2-oxobutanoate: step 2/4. Catalyzes the isomerization between 2-isopropylmalate and 3-isopropylmalate, via the formation of 2-isopropylmaleate. The polypeptide is 3-isopropylmalate dehydratase large subunit (Corynebacterium jeikeium (strain K411)).